We begin with the raw amino-acid sequence, 157 residues long: SsrA-binding protein (157 aa).

The tract at residues 133 to 157 is disordered; sequence LHDKRESEKKRDWGREKGRLLRARG. Residues 135–151 show a composition bias toward basic and acidic residues; that stretch reads DKRESEKKRDWGREKGR.

Belongs to the SmpB family.

It localises to the cytoplasm. Functionally, required for rescue of stalled ribosomes mediated by trans-translation. Binds to transfer-messenger RNA (tmRNA), required for stable association of tmRNA with ribosomes. tmRNA and SmpB together mimic tRNA shape, replacing the anticodon stem-loop with SmpB. tmRNA is encoded by the ssrA gene; the 2 termini fold to resemble tRNA(Ala) and it encodes a 'tag peptide', a short internal open reading frame. During trans-translation Ala-aminoacylated tmRNA acts like a tRNA, entering the A-site of stalled ribosomes, displacing the stalled mRNA. The ribosome then switches to translate the ORF on the tmRNA; the nascent peptide is terminated with the 'tag peptide' encoded by the tmRNA and targeted for degradation. The ribosome is freed to recommence translation, which seems to be the essential function of trans-translation. The protein is SsrA-binding protein of Bradyrhizobium sp. (strain BTAi1 / ATCC BAA-1182).